A 62-amino-acid polypeptide reads, in one-letter code: Cytochrome b-c1 complex subunit 6-2, mitochondrial (62 aa).

2 disulfides stabilise this stretch: Cys17–Cys59 and Cys31–Cys45.

This sequence belongs to the UQCRH/QCR6 family. As to quaternary structure, component of the ubiquinol-cytochrome c oxidoreductase (cytochrome b-c1 complex, complex III, CIII), a multisubunit enzyme composed of 10 subunits. The complex is composed of 3 respiratory subunits cytochrome b (MT-CYB), cytochrome c1 (CYC1-1 or CYC1-2) and Rieske protein (UCR1-1 or UCR1-2), 2 core protein subunits MPPalpha1 (or MPPalpha2) and MPPB, and 5 low-molecular weight protein subunits QCR7-1 (or QCR7-2), UCRQ-1 (or UCRQ-2), QCR9, UCRY and probably QCR6-1 (or QCR6-2). The complex exists as an obligatory dimer and forms supercomplexes (SCs) in the inner mitochondrial membrane with NADH-ubiquinone oxidoreductase (complex I, CI), resulting in different assemblies (supercomplexes SCI(1)III(2) and SCI(2)III(4)).

The protein localises to the mitochondrion inner membrane. In terms of biological role, component of the ubiquinol-cytochrome c oxidoreductase, a multisubunit transmembrane complex that is part of the mitochondrial electron transport chain which drives oxidative phosphorylation. The respiratory chain contains 3 multisubunit complexes succinate dehydrogenase (complex II, CII), ubiquinol-cytochrome c oxidoreductase (cytochrome b-c1 complex, complex III, CIII) and cytochrome c oxidase (complex IV, CIV), that cooperate to transfer electrons derived from NADH and succinate to molecular oxygen, creating an electrochemical gradient over the inner membrane that drives transmembrane transport and the ATP synthase. The cytochrome b-c1 complex catalyzes electron transfer from ubiquinol to cytochrome c, linking this redox reaction to translocation of protons across the mitochondrial inner membrane, with protons being carried across the membrane as hydrogens on the quinol. In the process called Q cycle, 2 protons are consumed from the matrix, 4 protons are released into the intermembrane space and 2 electrons are passed to cytochrome c. The protein is Cytochrome b-c1 complex subunit 6-2, mitochondrial (QCR6-2) of Arabidopsis thaliana (Mouse-ear cress).